The following is a 397-amino-acid chain: Probable peptidoglycan glycosyltransferase FtsW (397 aa).

Over 1–30 the chain is Cytoplasmic; sequence MYGLEMLEKIKLEYDKWACLTPKNSLYDRT. The helical transmembrane segment at 31–51 threads the bilayer; sequence LVWLFLSLLMIGFIMVTSASI. Topologically, residues 52-61 are periplasmic; it reads PVSTRLNNDP. A helical transmembrane segment spans residues 62–82; sequence FHFAIRDSIYLACSLLAFAFV. The Cytoplasmic segment spans residues 83-94; it reads VKIPMRNWEKYN. Residues 95 to 115 form a helical membrane-spanning segment; sequence VPLFLLSLLFLASVLIFGRSV. The Periplasmic segment spans residues 116–126; sequence NGSIRWIQLGP. A helical transmembrane segment spans residues 127 to 146; that stretch reads INFQPAELSKLAIICYFSSF. Over 147 to 158 the chain is Cytoplasmic; sequence YVRKYDEMRNRS. 2 helical membrane passes run 159-179 and 180-200; these read ASVI…LLQP and DLGS…IMGA. A topological domain (cytoplasmic) is located at residue Lys201. Residues 202–222 traverse the membrane as a helical segment; sequence VMQFLLLIVTASVSFILLVLT. The Periplasmic portion of the chain corresponds to 223-280; it reads SEYRLKRVTSFLDPFADAYGDGFQLSNAQMAFGQGQLWGQGLGNSVQKLEYLPEAHTD. Residues 281–301 traverse the membrane as a helical segment; sequence FVMAVVAEEFGFIGIIFMVVL. At 302 to 325 the chain is on the cytoplasmic side; sequence LLCLSFRAIKISRDALKLEARFRG. The chain crosses the membrane as a helical span at residues 326–346; it reads FFAFGVAIWVFLQGSVNLGVA. Residues 347–356 lie on the Periplasmic side of the membrane; that stretch reads SGALPTKGLT. The helical transmembrane segment at 357 to 377 threads the bilayer; the sequence is FPLVSYGGSSLVIMSVAIAIL. Residues 378-397 are Cytoplasmic-facing; it reads LRIDYENRLTRVGHAQIKEP.

This sequence belongs to the SEDS family. FtsW subfamily.

It is found in the cell inner membrane. It carries out the reaction [GlcNAc-(1-&gt;4)-Mur2Ac(oyl-L-Ala-gamma-D-Glu-L-Lys-D-Ala-D-Ala)](n)-di-trans,octa-cis-undecaprenyl diphosphate + beta-D-GlcNAc-(1-&gt;4)-Mur2Ac(oyl-L-Ala-gamma-D-Glu-L-Lys-D-Ala-D-Ala)-di-trans,octa-cis-undecaprenyl diphosphate = [GlcNAc-(1-&gt;4)-Mur2Ac(oyl-L-Ala-gamma-D-Glu-L-Lys-D-Ala-D-Ala)](n+1)-di-trans,octa-cis-undecaprenyl diphosphate + di-trans,octa-cis-undecaprenyl diphosphate + H(+). It participates in cell wall biogenesis; peptidoglycan biosynthesis. Its function is as follows. Peptidoglycan polymerase that is essential for cell division. This Haemophilus ducreyi (strain 35000HP / ATCC 700724) protein is Probable peptidoglycan glycosyltransferase FtsW.